Reading from the N-terminus, the 200-residue chain is Prolactin (200 aa).

3 cysteine pairs are disulfide-bonded: Cys-4–Cys-11, Cys-59–Cys-175, and Cys-192–Cys-200.

This sequence belongs to the somatotropin/prolactin family. As to expression, pituitary gland.

It localises to the secreted. This is Prolactin (prl) from Protopterus aethiopicus (Marbled lungfish).